A 492-amino-acid polypeptide reads, in one-letter code: UPF0236 protein TTE0402 (492 aa).

The protein belongs to the UPF0236 family.

This is UPF0236 protein TTE0402 from Caldanaerobacter subterraneus subsp. tengcongensis (strain DSM 15242 / JCM 11007 / NBRC 100824 / MB4) (Thermoanaerobacter tengcongensis).